Consider the following 278-residue polypeptide: ATP-dependent dethiobiotin synthetase BioD 1 (278 aa).

51-56 contacts ATP; the sequence is NVGKTI. Position 55 (Thr55) interacts with Mg(2+). Lys76 is a catalytic residue. Asp102 is a binding site for ATP. Residues Asp102 and Glu163 each contribute to the Mg(2+) site. ATP contacts are provided by residues 223 to 224 and 252 to 254; these read NR and PYI.

This sequence belongs to the dethiobiotin synthetase family. Homodimer. The cofactor is Mg(2+).

It localises to the cytoplasm. It catalyses the reaction (7R,8S)-7,8-diammoniononanoate + CO2 + ATP = (4R,5S)-dethiobiotin + ADP + phosphate + 3 H(+). Its pathway is cofactor biosynthesis; biotin biosynthesis; biotin from 7,8-diaminononanoate: step 1/2. In terms of biological role, catalyzes a mechanistically unusual reaction, the ATP-dependent insertion of CO2 between the N7 and N8 nitrogen atoms of 7,8-diaminopelargonic acid (DAPA, also called 7,8-diammoniononanoate) to form a ureido ring. This Haemophilus ducreyi (strain 35000HP / ATCC 700724) protein is ATP-dependent dethiobiotin synthetase BioD 1.